Reading from the N-terminus, the 289-residue chain is ATP synthase gamma chain (289 aa).

Belongs to the ATPase gamma chain family. In terms of assembly, F-type ATPases have 2 components, CF(1) - the catalytic core - and CF(0) - the membrane proton channel. CF(1) has five subunits: alpha(3), beta(3), gamma(1), delta(1), epsilon(1). CF(0) has three main subunits: a, b and c.

It is found in the cell inner membrane. Functionally, produces ATP from ADP in the presence of a proton gradient across the membrane. The gamma chain is believed to be important in regulating ATPase activity and the flow of protons through the CF(0) complex. In Nitrosococcus oceani (strain ATCC 19707 / BCRC 17464 / JCM 30415 / NCIMB 11848 / C-107), this protein is ATP synthase gamma chain.